The chain runs to 147 residues: MVHLTAEEKAAITSLWGKMNVEEAGGEALGRLLVVYPWTQRFFDNFGNLSSPSAILGNPKVKAHGKKVLTSFGDAIKNMDNLKTTFAKLSELHCDKLHVDPENFRLLGNVMVIILATHFGKEFTPEVQAAWQKLVSAVAIALGHKYH.

The Globin domain occupies 3–147 (HLTAEEKAAI…VAIALGHKYH (145 aa)). 2 positions are modified to phosphoserine: Ser14 and Ser51. 2 residues coordinate heme b: His64 and His93.

This sequence belongs to the globin family. As to quaternary structure, heterotetramer of two alpha chains and two epsilon chains in early embryonic hemoglobin Gower-2; two zeta chains and two epsilon chains in early embryonic hemoglobin Gower-1. As to expression, red blood cells.

The epsilon chain is a beta-type chain of early mammalian embryonic hemoglobin. In Ateles belzebuth (White-bellied spider monkey), this protein is Hemoglobin subunit epsilon (HBE1).